We begin with the raw amino-acid sequence, 398 residues long: Acetate kinase (398 aa).

Residue asparagine 8 participates in Mg(2+) binding. Lysine 15 contributes to the ATP binding site. Residue arginine 89 coordinates substrate. Aspartate 146 functions as the Proton donor/acceptor in the catalytic mechanism. Residues 206–210 (HIGNG), 283–285 (DMR), and 331–335 (GMGEN) each bind ATP. Glutamate 383 lines the Mg(2+) pocket.

It belongs to the acetokinase family. Homodimer. Mg(2+) serves as cofactor. The cofactor is Mn(2+).

The protein resides in the cytoplasm. It catalyses the reaction acetate + ATP = acetyl phosphate + ADP. It functions in the pathway metabolic intermediate biosynthesis; acetyl-CoA biosynthesis; acetyl-CoA from acetate: step 1/2. Catalyzes the formation of acetyl phosphate from acetate and ATP. Can also catalyze the reverse reaction. This is Acetate kinase from Streptococcus pyogenes serotype M28 (strain MGAS6180).